Reading from the N-terminus, the 569-residue chain is Probable santalene synthase (569 aa).

The (2E)-geranyl diphosphate site is built by Arg284, Asp321, Asp325, Arg460, and Asn463. Mg(2+)-binding residues include Asp321 and Asp325. The short motif at 321-325 (DDAYD) is the DDXXD motif element. 3 residues coordinate Mg(2+): Asn463, Thr467, and Glu471.

This sequence belongs to the terpene synthase family. Tpsb subfamily. Mg(2+) serves as cofactor. It depends on Mn(2+) as a cofactor.

Functionally, catalyzes the formation of santalene. The protein is Probable santalene synthase (SSY) of Santalum murrayanum (Bitter quandong).